Consider the following 588-residue polypeptide: Secreted triacylglycerol lipase LIP1 (588 aa).

The N-terminal stretch at 1 to 20 (MRFSGFVSGLGLGLLTAVSA) is a signal peptide. The Acyl-ester intermediate role is filled by S258. The N-linked (GlcNAc...) asparagine glycan is linked to N400.

It belongs to the type-B carboxylesterase/lipase family.

The protein resides in the secreted. It carries out the reaction a triacylglycerol + H2O = a diacylglycerol + a fatty acid + H(+). Its function is as follows. Secreted acylglycerol lipase required for efficient utilization of saturated triglyceride lipids. Is not involved in virulence. The protein is Secreted triacylglycerol lipase LIP1 of Gibberella zeae (strain ATCC MYA-4620 / CBS 123657 / FGSC 9075 / NRRL 31084 / PH-1) (Wheat head blight fungus).